Consider the following 323-residue polypeptide: GTP 3',8-cyclase (323 aa).

A Radical SAM core domain is found at 4 to 226; sequence TFQRQINYLR…LEPFPDLATN (223 aa). Arginine 13 is a GTP binding site. The [4Fe-4S] cluster site is built by cysteine 20 and cysteine 24. S-adenosyl-L-methionine is bound at residue tyrosine 26. Position 27 (cysteine 27) interacts with [4Fe-4S] cluster. Arginine 63 contacts GTP. Glycine 67 provides a ligand contact to S-adenosyl-L-methionine. Threonine 94 contacts GTP. Residue serine 118 coordinates S-adenosyl-L-methionine. Position 155 (lysine 155) interacts with GTP. Methionine 189 contributes to the S-adenosyl-L-methionine binding site. [4Fe-4S] cluster is bound by residues cysteine 252 and cysteine 255. A GTP-binding site is contributed by 257–259; that stretch reads RLR. Cysteine 269 contacts [4Fe-4S] cluster.

The protein belongs to the radical SAM superfamily. MoaA family. In terms of assembly, monomer and homodimer. [4Fe-4S] cluster serves as cofactor.

It catalyses the reaction GTP + AH2 + S-adenosyl-L-methionine = (8S)-3',8-cyclo-7,8-dihydroguanosine 5'-triphosphate + 5'-deoxyadenosine + L-methionine + A + H(+). The protein operates within cofactor biosynthesis; molybdopterin biosynthesis. Its function is as follows. Catalyzes the cyclization of GTP to (8S)-3',8-cyclo-7,8-dihydroguanosine 5'-triphosphate. This is GTP 3',8-cyclase from Moorella thermoacetica (strain ATCC 39073 / JCM 9320).